Reading from the N-terminus, the 298-residue chain is 3-deoxy-manno-octulosonate cytidylyltransferase (298 aa).

Residues 22–42 (VWVLHGLALGAAAAAAAVAYL) form a helical membrane-spanning segment.

The protein belongs to the KdsB family. Mg(2+) serves as cofactor. Ubiquitous.

Its subcellular location is the membrane. It catalyses the reaction 3-deoxy-alpha-D-manno-oct-2-ulosonate + CTP = CMP-3-deoxy-beta-D-manno-octulosonate + diphosphate. It participates in nucleotide-sugar biosynthesis; CMP-3-deoxy-D-manno-octulosonate biosynthesis; CMP-3-deoxy-D-manno-octulosonate from 3-deoxy-D-manno-octulosonate and CTP: step 1/1. In terms of biological role, catalyzes the production of the sugar nucleotide CMP-3-deoxy-D-manno-octulosonate (CMP-KDO). CTP is the preferred nucleotide donor, and it can partially be replaced with UTP but not with ATP. Activates KDO during the biosynthesis of rhamnogalacturonan II (RG-II), a structurally complex pectic polysaccharide of the primary cell wall. RG-II is essential for the cell wall integrity of rapidly growing tissues and pollen tube growth and elongation. In Zea mays (Maize), this protein is 3-deoxy-manno-octulosonate cytidylyltransferase.